Reading from the N-terminus, the 437-residue chain is GTPase HflX (437 aa).

Residues 150–173 (DRQGGGSGGGKGGGGAARGEGEKQ) form a disordered region. The segment covering 152 to 167 (QGGGSGGGKGGGGAAR) has biased composition (gly residues). In terms of domain architecture, Hflx-type G spans 212–382 (ATAAIVGYTN…ACVEMLESRV (171 aa)). Residues 218 to 225 (GYTNAGKS), 243 to 247 (FATLD), 265 to 268 (DTVG), 331 to 334 (NKVD), and 360 to 362 (SVK) each bind GTP. The Mg(2+) site is built by serine 225 and threonine 245.

This sequence belongs to the TRAFAC class OBG-HflX-like GTPase superfamily. HflX GTPase family. As to quaternary structure, monomer. Associates with the 50S ribosomal subunit. Requires Mg(2+) as cofactor.

It localises to the cytoplasm. Its function is as follows. GTPase that associates with the 50S ribosomal subunit and may have a role during protein synthesis or ribosome biogenesis. The chain is GTPase HflX from Akkermansia muciniphila (strain ATCC BAA-835 / DSM 22959 / JCM 33894 / BCRC 81048 / CCUG 64013 / CIP 107961 / Muc).